A 6631-amino-acid polypeptide reads, in one-letter code: Replicase polyprotein 1ab (6631 aa).

The Cytoplasmic portion of the chain corresponds to 1-1752; the sequence is MASSLKQGVS…VSSYKIVLCK (1752 aa). Ubiquitin-like domains are found at residues 675–780 and 1177–1229; these read KTVT…RDYE and CKQK…ILFI. The Macro domain occupies 1005 to 1181; sequence VKPATCEKPK…YFDATCKQKT (177 aa). The region spanning 1238-1499 is the Peptidase C16 domain; it reads EYYGLDAQKY…AKVVKEDVSN (262 aa). Catalysis depends on Cys-1276, which acts as the For PL-PRO activity. The C4-type; degenerate zinc finger occupies 1355–1392; it reads CNCGVKSYELRGLEACIQPVRAPNLLHFKTQYSNCPTC. Residues His-1439 and Asp-1450 each act as for PL-PRO activity in the active site. The helical transmembrane segment at 1753–1773 threads the bilayer; it reads VVFATLLIVWFIYTSNPVVFT. Residues 1753-1866 form an HD1 region; sequence VVFATLLIVW…KPVAGFVIIC (114 aa). One can recognise a 3Ecto domain in the interval 1771 to 1835; it reads VFTGIRVLDF…AYSVEQIYKD (65 aa). Topologically, residues 1774–1845 are lumenal; it reads GIRVLDFLFE…AASGINFNWN (72 aa). 2 disulfides stabilise this stretch: Cys-1787-Cys-1813 and Cys-1804-Cys-1810. Residues 1846-1866 traverse the membrane as a helical segment; that stretch reads WLYLVFLILFVKPVAGFVIIC. Residues 1867–2282 are Cytoplasmic-facing; it reads YCVKYLVLSS…TFKWFMSCFK (416 aa). Residues 1913-2003 are Y1; sequence YVQVHHILYC…KLKRHVKPTA (91 aa). Positions 1913 to 2265 constitute a CoV Nsp3 Y domain; the sequence is YVQVHHILYC…HTQKLLVEKK (353 aa). Zn(2+)-binding residues include His-1917, Cys-1922, Cys-1927, Cys-1930, Cys-1963, His-1966, Cys-1970, and Cys-1973. The interval 1917–1930 is ZF1; sequence HHILYCKDVTCEVC. The tract at residues 1963–1973 is ZF2; sequence CKRHNWYCRNC. Residues 2004–2106 form a Y2 region; that stretch reads YAYHVVYEAC…ILDQALYEQL (103 aa). The tract at residues 2004-2265 is coV-Y; the sequence is YAYHVVYEAC…HTQKLLVEKK (262 aa). Residues 2107-2165 form a Y3 region; it reads IVEPVSKSVIDKVCSILSNIISVDTAALNYKAGTLRDALLSITKDEEAVDMAIFCHNHE. Residues 2166 to 2265 form a Y4 region; sequence VEYTGDGFTN…HTQKLLVEKK (100 aa). Residues 2283-2303 traverse the membrane as a helical segment; it reads WLFVFYILFTACCLGYYYMEM. Residues 2283-2666 form an HD2 region; sequence WLFVFYILFT…LACCYLGFIL (384 aa). Residues 2304-2561 are Lumenal-facing; the sequence is NKSFVHPMYD…FFTGVNPNIY (258 aa). A helical membrane pass occupies residues 2562–2582; sequence IQLATMFLILVVIVLIFAMVI. The Cytoplasmic segment spans residues 2583–2613; the sequence is KFQGVFKAYATIVFTIMLVWVINAFVLCVHS. The chain crosses the membrane as a helical span at residues 2614 to 2634; the sequence is YNSVLAVILLVLYCYASMVTS. Residues 2635–2645 lie on the Lumenal side of the membrane; it reads RNTAIIMHCWL. The chain crosses the membrane as a helical span at residues 2646-2666; that stretch reads VFTFGLIVPTWLACCYLGFIL. Residues 2667-3098 lie on the Cytoplasmic side of the membrane; sequence YMYTPLVFWC…SSFVRKATSW (432 aa). A Nsp4C domain is found at 2686–2781; that stretch reads LYDGNEFVGN…RYSIGVSRLQ (96 aa). A Peptidase C30 domain is found at 2782–3088; that stretch reads AGFKKLVSPS…FNQVGGVRLQ (307 aa). Residues His-2822 and Cys-2924 each act as for 3CL-PRO activity in the active site. Residues 3099–3119 traverse the membrane as a helical segment; the sequence is FWSRCVLACFLFVLCAIVLFT. The interval 3099 to 3319 is HD3; that stretch reads FWSRCVLACF…WLCTCYFGLY (221 aa). The Lumenal portion of the chain corresponds to 3120–3123; the sequence is AVPL. Residues 3124–3144 form a helical membrane-spanning segment; sequence KFYVHAAVILLMAVLFISFTV. Residues 3145 to 3153 lie on the Cytoplasmic side of the membrane; the sequence is KHVMAYMDT. Residues 3154–3174 traverse the membrane as a helical segment; the sequence is FLLPTLITVIIGVCAEVPFIY. Topologically, residues 3175–3190 are lumenal; sequence NTLISQVVIFLSQWYD. Residues 3191–3211 form a helical membrane-spanning segment; that stretch reads PVVFDTMVPWMLLPLVLYTAF. Topologically, residues 3212–3259 are cytoplasmic; it reads KCVQGCYMNSFNTSLLMLYQFMKLGFVIYTSSNTLTAYTEGNWELFFE. Residues 3260–3280 traverse the membrane as a helical segment; the sequence is LVHTIVLANVSSNSLIGLIVF. Residues 3281-3298 are Lumenal-facing; sequence KCAKWMLYYCNATYFNNY. The chain crosses the membrane as a helical span at residues 3299-3319; it reads VLMAVMVNGIGWLCTCYFGLY. Topologically, residues 3320–6631 are cytoplasmic; it reads WWVNKVFGLT…FTSDSFVCTM (3312 aa). One can recognise a RdRp Nsp7 cofactor domain in the interval 3382–3464; it reads SKLSDVKCTT…DILKRSTVLQ (83 aa). One can recognise a RdRp Nsp8 cofactor domain in the interval 3465–3674; sequence SVTQEFSHIP…GHNKVDVALQ (210 aa). The region spanning 3675–3785 is the Nsp9 ssRNA-binding domain; that stretch reads NNELMPHGVK…GAISNVVVLQ (111 aa). The ExoN/MTase coactivator domain maps to 3787–3928; that stretch reads KGHETEEVDA…CDSLRQPKPS (142 aa). Cys-3860, Cys-3863, His-3869, Cys-3880, Cys-3906, Cys-3909, Cys-3917, and Cys-3919 together coordinate Zn(2+). Zinc fingers lie at residues 3860–3880 and 3906–3919; these read CLYC…DGRC and CTVC…GCQC. The region spanning 3942-4200 is the NiRAN domain; it reads YLNRVRGSSE…APERYFEYDV (259 aa). Residues 4205–4303 form the Nsp12 Interface domain; the sequence is KSYDLLKYDY…MNQDNTMSFS (99 aa). Residues His-4234, Cys-4240, Cys-4245, Cys-4249, and Cys-4426 each coordinate Zn(2+). One can recognise a Nsp12 RNA-dependent RNA polymerase domain in the interval 4304–4870; sequence KMGLSQLMQF…NMYRAPTTLQ (567 aa). The rdRp Fingers N-ter stretch occupies residues 4306–4519; sequence GLSQLMQFVG…HQKILKSIVN (214 aa). The tract at residues 4520–4558 is rdRp Palm N-ter; that stretch reads TRNAPVVIGTTKFYGGWDNMLRNLIQGVEDPILMGWDYP. Residues 4550 to 4712 enclose the RdRp catalytic domain; sequence PILMGWDYPK…CYNNTLAKQG (163 aa). The rdRp Fingers C-ter stretch occupies residues 4559–4617; the sequence is KCDRAMPNLLRIAASLVLARKHTNCCTWSERVYRLYNECAQVLSETVLATGGIYVKPGG. The Zn(2+) site is built by His-4580, Cys-4583, and Cys-4584. The segment at 4618-4753 is rdRp Palm C-ter; sequence TSSGDATTAY…EKGPHEFCSQ (136 aa). Catalysis depends on residues Ser-4697, Asp-4698, and Asp-4699. A rdRp Thumb region spans residues 4754–4870; sequence HTMLVEVDGE…NMYRAPTTLQ (117 aa). The region spanning 4871–4983 is the CV ZBD domain; it reads SCGVCVVCNS…DDFNQLATTN (113 aa). Residues Cys-4875, Cys-4878, Cys-4886, Cys-4889, Cys-4896, Cys-4899, His-4903, His-4909, Cys-4920, Cys-4925, Cys-4942, and His-4945 each coordinate Zn(2+). The (+)RNA virus helicase ATP-binding domain maps to 5127-5307; that stretch reads MVPACFVNNI…MVCVKPDIFL (181 aa). Position 5152-5159 (5152-5159) interacts with ATP; the sequence is GPPGSGKS. One can recognise a (+)RNA virus helicase C-terminal domain in the interval 5308–5479; sequence AKCYRCPKEI…QGTGLFKICN (172 aa). An ExoN domain is found at 5541 to 5755; that stretch reads MFITRDEAIR…RCLAINNAFC (215 aa). Residues Asp-5559, Glu-5561, and Glu-5660 contribute to the active site. Cys-5676, Cys-5678, Cys-5694, His-5697, His-5725, Cys-5729, and His-5732 together coordinate Zn(2+). Residues His-5736 and Asp-5741 contribute to the active site. Cys-5747 provides a ligand contact to Zn(2+). Residues 5764 to 5991 enclose the N7-MTase domain; that stretch reads YPHIANEDEV…NLWKSFSALQ (228 aa). 5799–5805 is a binding site for S-adenosyl-L-methionine; it reads DIGNPKG. A gpppA-binding region spans residues 5879 to 5893; it reads CNGGSLYVNKHAFHT. Positions 5917, 5937, 5948, and 5951 each coordinate Zn(2+). The Nsp15 N-terminal oligomerization domain occupies 5992-6052; it reads SIDNIAYNMY…SVAFELYAKR (61 aa). The region spanning 6053-6168 is the AV-Nsp11N/CoV-Nsp15M domain; sequence NIRTLPNNRI…VYKRVNGAFV (116 aa). The 142-residue stretch at 6185 to 6326 folds into the NendoU domain; it reads EPRSDVERDF…EDGIIKTCYP (142 aa). Residues His-6214, His-6229, Lys-6269, Lys-6373, Asp-6457, Lys-6501, and Glu-6534 contribute to the active site. The Nidovirus-type SAM-dependent 2'-O-MTase domain occupies 6329–6628; it reads QSAWTCGYNM…NTSFTSDSFV (300 aa).

It belongs to the coronaviruses polyprotein 1ab family. In terms of assembly, interacts with host PHB and PHB2. Interacts with papain-like protease and non-structural protein 6. As to quaternary structure, monomer. Homodimer. Only the homodimer shows catalytic activity. In terms of assembly, eight copies of nsp7 and eight copies of nsp8 assemble to form a heterohexadecamer dsRNA-encircling ring structure. Eight copies of nsp7 and eight copies of nsp8 assemble to form a heterohexadecamer dsRNA-encircling ring structure. Interacts with ORF6 protein. As to quaternary structure, homodimer. In terms of assembly, homododecamer. Interacts with proofreading exoribonuclease nsp14 and 2'-O-methyltransferase nsp16; these interactions enhance nsp14 and nsp16 enzymatic activities. Interacts with host DDX1 (via C-terminus). Interacts with non-structural protein 10. As to quaternary structure, homohexamer. In terms of assembly, interacts with non-structural protein 10. Requires Mn(2+) as cofactor. The cofactor is Zn(2+). Post-translationally, specific enzymatic cleavages in vivo by its own proteases yield mature proteins. 3C-like proteinase nsp5 liberates nsps 6-16 from the polyprotein. Papain-like and 3C-like proteinases are autocatalytically processed. N-glycosylated.

It localises to the host endoplasmic reticulum membrane. Its subcellular location is the host cytoplasm. It is found in the host perinuclear region. The protein resides in the host endoplasmic reticulum. The protein localises to the host endoplasmic reticulum-Golgi intermediate compartment. The catalysed reaction is Thiol-dependent hydrolysis of ester, thioester, amide, peptide and isopeptide bonds formed by the C-terminal Gly of ubiquitin (a 76-residue protein attached to proteins as an intracellular targeting signal).. It carries out the reaction RNA(n) + a ribonucleoside 5'-triphosphate = RNA(n+1) + diphosphate. It catalyses the reaction ATP + H2O = ADP + phosphate + H(+). The enzyme catalyses a 5'-end diphospho-ribonucleoside in mRNA + GTP + H(+) = a 5'-end (5'-triphosphoguanosine)-ribonucleoside in mRNA + diphosphate. The catalysed reaction is uridylyl-uridylyl-ribonucleotide-RNA = a 3'-end uridylyl-2',3'-cyclophospho-uridine-RNA + a 5'-end dephospho-ribonucleoside-RNA. It carries out the reaction a 5'-end (N(7)-methyl 5'-triphosphoguanosine)-ribonucleoside in mRNA + S-adenosyl-L-methionine = a 5'-end (N(7)-methyl 5'-triphosphoguanosine)-(2'-O-methyl-ribonucleoside) in mRNA + S-adenosyl-L-homocysteine + H(+). In terms of biological role, multifunctional protein involved in the transcription and replication of viral RNAs. Contains the proteinases responsible for the cleavages of the polyprotein. Its function is as follows. May play a role in the modulation of host cell survival signaling pathway by interacting with host PHB and PHB2. Indeed, these two proteins play a role in maintaining the functional integrity of the mitochondria and protecting cells from various stresses. Responsible for the cleavages located at the N-terminus of the replicase polyprotein. In addition, PL-PRO possesses a deubiquitinating/deISGylating activity and processes both 'Lys-48'- and 'Lys-63'-linked polyubiquitin chains from cellular substrates. Functionally, plays a role in host membrane rearrangement that leads to creation of cytoplasmic double-membrane vesicles (DMV) necessary for viral replication. Alone is able to induce paired membranes. Coexpression of nsp3 and nsp4 does not result in the formation of DMVs. In terms of biological role, responsible for the majority of cleavages as it cleaves the C-terminus of replicase polyprotein at 11 sites. Recognizes substrates containing the core sequence [ILMVF]-Q-|-[SGACN]. Inhibited by the substrate-analog Cbz-Val-Asn-Ser-Thr-Leu-Gln-CMK. Its function is as follows. Forms a hexadecamer with nsp8 (8 subunits of each) that may participate in viral replication by acting as a primase. Alternatively, may synthesize substantially longer products than oligonucleotide primers. Forms a hexadecamer with nsp7 (8 subunits of each) that may participate in viral replication by acting as a primase. Alternatively, may synthesize substantially longer products than oligonucleotide primers. Functionally, forms a primer, NSP9-pU, which is utilized by the polymerase for the initiation of RNA chains. Interacts with ribosome signal recognition particle RNA (SRP). Together with NSP8, suppress protein integration into the cell membrane, thereby disrupting host immune defenses. In terms of biological role, plays a pivotal role in viral transcription by stimulating both nsp14 3'-5' exoribonuclease and nsp16 2'-O-methyltransferase activities. Therefore plays an essential role in viral mRNAs cap methylation. Its function is as follows. RNA-directed RNA polymerase that catalyzes the transcription of viral genomic and subgenomic RNAs. Acts in complex with nsp7 and nsp8 to transcribe both the minus and positive strands of genomic RNA. The kinase-like NiRAN domain of NSP12 attaches one or more nucleotides to the amino terminus of NSP9, forming a covalent RNA-protein intermediate that serves as transcription/replication primer. Subgenomic RNAs (sgRNAs) are formed by discontinuous transcription: The polymerase has the ability to pause at transcription-regulating sequences (TRS) and jump to the leader TRS, resulting in a major deletion. This creates a series of subgenomic RNAs that are replicated, transcribed and translated. In addition, Nsp12 is a subunit of the viral RNA capping enzyme that catalyzes the RNA guanylyltransferase reaction for genomic and sub-genomic RNAs. Subsequently, the NiRAN domain transfers RNA to GDP, and forms the core cap structure GpppA-RNA. Multi-functional protein with a zinc-binding domain in N-terminus displaying RNA and DNA duplex-unwinding activities with 5' to 3' polarity. Activity of helicase is dependent on magnesium. Functionally, enzyme possessing two different activities: an exoribonuclease activity acting on both ssRNA and dsRNA in a 3' to 5' direction and a N7-guanine methyltransferase activity. Acts as a proofreading exoribonuclease for RNA replication, thereby lowering The sensitivity of the virus to RNA mutagens. In terms of biological role, plays a role in viral transcription/replication and prevents the simultaneous activation of host cell dsRNA sensors, such as MDA5/IFIH1, OAS, and PKR. Acts by degrading the 5'-polyuridines generated during replication of the poly(A) region of viral genomic and subgenomic RNAs. Catalyzes a two-step reaction in which a 2'3'-cyclic phosphate (2'3'-cP) is first generated by 2'-O transesterification, which is then hydrolyzed to a 3'-phosphate (3'-P). If not degraded, poly(U) RNA would hybridize with poly(A) RNA tails and activate host dsRNA sensors. Its function is as follows. Methyltransferase that mediates mRNA cap 2'-O-ribose methylation to the 5'-cap structure of viral mRNAs. N7-methyl guanosine cap is a prerequisite for binding of nsp16. Therefore plays an essential role in viral mRNAs cap methylation which is essential to evade immune system. The polypeptide is Replicase polyprotein 1ab (rep) (Gallus gallus (Chicken)).